A 383-amino-acid chain; its full sequence is Chorismate synthase (383 aa).

NADP(+) contacts are provided by Arg39 and Arg45. FMN-binding positions include 128 to 130, Gly291, 306 to 310, and Arg332; these read RAS and KPIAT.

Belongs to the chorismate synthase family. In terms of assembly, homotetramer. It depends on FMNH2 as a cofactor.

The enzyme catalyses 5-O-(1-carboxyvinyl)-3-phosphoshikimate = chorismate + phosphate. Its pathway is metabolic intermediate biosynthesis; chorismate biosynthesis; chorismate from D-erythrose 4-phosphate and phosphoenolpyruvate: step 7/7. Functionally, catalyzes the anti-1,4-elimination of the C-3 phosphate and the C-6 proR hydrogen from 5-enolpyruvylshikimate-3-phosphate (EPSP) to yield chorismate, which is the branch point compound that serves as the starting substrate for the three terminal pathways of aromatic amino acid biosynthesis. This reaction introduces a second double bond into the aromatic ring system. The chain is Chorismate synthase from Thermus thermophilus (strain ATCC BAA-163 / DSM 7039 / HB27).